A 319-amino-acid chain; its full sequence is ATP-dependent 6-phosphofructokinase (319 aa).

G11 is an ATP binding site. 21–25 provides a ligand contact to ADP; the sequence is RSIAR. ATP is bound by residues 72–73 and 102–105; these read RC and GDGS. Position 103 (D103) interacts with Mg(2+). 125 to 127 is a substrate binding site; it reads TID. D127 (proton acceptor) is an active-site residue. R154 serves as a coordination point for ADP. Substrate is bound by residues R162 and 169–171; that span reads MGR. Residues 185–187, R211, and 213–215 contribute to the ADP site; these read GAE and KLH. Residues E222, K243, and 249 to 252 contribute to the substrate site; that span reads HVQR.

The protein belongs to the phosphofructokinase type A (PFKA) family. ATP-dependent PFK group I subfamily. Prokaryotic clade 'B1' sub-subfamily. As to quaternary structure, homotetramer. Mg(2+) is required as a cofactor.

The protein localises to the cytoplasm. The catalysed reaction is beta-D-fructose 6-phosphate + ATP = beta-D-fructose 1,6-bisphosphate + ADP + H(+). The protein operates within carbohydrate degradation; glycolysis; D-glyceraldehyde 3-phosphate and glycerone phosphate from D-glucose: step 3/4. Its activity is regulated as follows. Allosterically activated by ADP and other diphosphonucleosides, and allosterically inhibited by phosphoenolpyruvate. Functionally, catalyzes the phosphorylation of D-fructose 6-phosphate to fructose 1,6-bisphosphate by ATP, the first committing step of glycolysis. The polypeptide is ATP-dependent 6-phosphofructokinase (Finegoldia magna (strain ATCC 29328 / DSM 20472 / WAL 2508) (Peptostreptococcus magnus)).